A 221-amino-acid chain; its full sequence is Glutathione peroxidase (221 aa).

The signal sequence occupies residues 1 to 19 (MFIQLLILSYAILLQLIAT). A glycan (N-linked (GlcNAc...) asparagine) is linked at Asn-28. Residue Cys-72 is part of the active site. 2 N-linked (GlcNAc...) asparagine glycosylation sites follow: Asn-87 and Asn-90.

It belongs to the glutathione peroxidase family. In terms of assembly, homotetramer.

It is found in the secreted. Its subcellular location is the extracellular space. The enzyme catalyses 2 glutathione + H2O2 = glutathione disulfide + 2 H2O. The chain is Glutathione peroxidase from Dirofilaria immitis (Canine heartworm).